We begin with the raw amino-acid sequence, 350 residues long: Small ribosomal subunit biogenesis GTPase RsgA (350 aa).

Over residues 1–17 the composition is skewed to polar residues; the sequence is MSKNKLSKGQQRRVNAN. The disordered stretch occupies residues 1–33; that stretch reads MSKNKLSKGQQRRVNANHQRRLKTSKEKPDYDD. Residues 104 to 273 enclose the CP-type G domain; that stretch reads TSVLTRPDFY…VIDSPGVREF (170 aa). GTP contacts are provided by residues 160–163 and 214–222; these read NKID and GQSGVGKSS. Residues cysteine 297, cysteine 302, histidine 304, and cysteine 310 each contribute to the Zn(2+) site.

Belongs to the TRAFAC class YlqF/YawG GTPase family. RsgA subfamily. As to quaternary structure, monomer. Associates with 30S ribosomal subunit, binds 16S rRNA. The cofactor is Zn(2+).

It is found in the cytoplasm. In terms of biological role, one of several proteins that assist in the late maturation steps of the functional core of the 30S ribosomal subunit. Helps release RbfA from mature subunits. May play a role in the assembly of ribosomal proteins into the subunit. Circularly permuted GTPase that catalyzes slow GTP hydrolysis, GTPase activity is stimulated by the 30S ribosomal subunit. This chain is Small ribosomal subunit biogenesis GTPase RsgA, found in Shigella boydii serotype 18 (strain CDC 3083-94 / BS512).